The following is a 164-amino-acid chain: UPF0303 protein Smed_2872 (164 aa).

Belongs to the UPF0303 family.

In Sinorhizobium medicae (strain WSM419) (Ensifer medicae), this protein is UPF0303 protein Smed_2872.